The primary structure comprises 262 residues: Cyclin-dependent kinase inhibitor 1 (262 aa).

The segment at 140–212 (SDVAEAGSEH…SAQQATRPKI (73 aa)) is disordered. Positions 160 to 169 (SGRDRERRET) are enriched in basic and acidic residues. Positions 198–208 (SAATASAQQAT) are enriched in low complexity.

Belongs to the CDI family. ICK/KRP subfamily. Expressed in roots, stems, leaves and apex.

In terms of biological role, regulates the production of endosperm cells, affecting seed filling and embryo development. Regulates endoreduplication of endosperm cells. May play a role in the exit from the mitotic cell cycle during rice grain formation. Inhibitis leaf elongation rates by decreasing cell number, that is partly compensated by increased cell size. May not affect growth rate or cell size of the primary root. The protein is Cyclin-dependent kinase inhibitor 1 (KRP1) of Oryza sativa subsp. japonica (Rice).